The sequence spans 265 residues: Iron(3+)-hydroxamate import ATP-binding protein FhuC (265 aa).

Residues Phe12–Pro248 form the ABC transporter domain. ATP-binding positions include Gly44–Ser51 and Cys168–Asp179.

Belongs to the ABC transporter superfamily. Iron (Fe3+)-hydroxamate importer (TC 3.A.1.14.7) family. The complex is composed of two ATP-binding proteins (FhuC), a transmembrane protein (FhuB) and a solute-binding protein (FhuD). FhuC interacts with FhuB.

The protein resides in the cell inner membrane. The enzyme catalyses ATP + H2O + Fe(3+)-hydroxamate complex-[hydroxamate-binding protein]Side 1 = ADP + phosphate + Fe(3+)-hydroxamate complexSide 2 + [hydroxamate-binding protein]Side 1.. ATPase activity is inhibited by vanadate. In terms of biological role, part of the ABC transporter complex FhuCDB involved in iron(3+)-hydroxamate import. Responsible for energy coupling to the transport system. This is Iron(3+)-hydroxamate import ATP-binding protein FhuC (fhuC) from Escherichia coli (strain K12).